The chain runs to 407 residues: Argininosuccinate synthase (407 aa).

Residues 10–18 (AYSGGLDTS) and Ala37 each bind ATP. Tyr88 and Ser93 together coordinate L-citrulline. Gly118 contacts ATP. Positions 120, 124, and 125 each coordinate L-aspartate. Asn124 is a binding site for L-citrulline. The L-citrulline site is built by Arg128, Ser180, Ser189, Glu265, and Tyr277.

Belongs to the argininosuccinate synthase family. Type 1 subfamily. As to quaternary structure, homotetramer.

The protein resides in the cytoplasm. It catalyses the reaction L-citrulline + L-aspartate + ATP = 2-(N(omega)-L-arginino)succinate + AMP + diphosphate + H(+). It participates in amino-acid biosynthesis; L-arginine biosynthesis; L-arginine from L-ornithine and carbamoyl phosphate: step 2/3. This Alcanivorax borkumensis (strain ATCC 700651 / DSM 11573 / NCIMB 13689 / SK2) protein is Argininosuccinate synthase.